The following is a 560-amino-acid chain: Putative transport protein VP1232 (560 aa).

Helical transmembrane passes span 8 to 28, 37 to 57, 66 to 86, 91 to 111, and 164 to 184; these read LLDQ…LAIG, LGNS…GFSF, FMLF…GIFF, HYFI…YGLS, and VGYA…AKLL. RCK C-terminal domains are found at residues 205 to 292 and 293 to 376; these read LGNS…FRNG and KEVF…KIGF. The next 6 helical transmembrane spans lie at 386 to 406, 409 to 429, 443 to 463, 478 to 498, 506 to 526, and 539 to 559; these read LLAF…TMTF, VSFS…LGFL, ALNM…GLSA, VIGL…LVGA, ALLF…DVVN, and AGTY…LIIL.

The protein belongs to the AAE transporter (TC 2.A.81) family. YbjL subfamily.

Its subcellular location is the cell membrane. The protein is Putative transport protein VP1232 of Vibrio parahaemolyticus serotype O3:K6 (strain RIMD 2210633).